Reading from the N-terminus, the 913-residue chain is MGSFKSSVFILVLHLLEGALSNSLIHLNNNGYEGIVIAIDPNVPEDETLIQQIKDMVTQASPYLFEATEKRFYFKNVAILVPENWKTKPEYERPKLETYKNADVLVAEPNPPGNDQPYTEQMGKCGEKGERIYFTPDFLAGKRLDEYGPQGRVFVHEWAHLRWGLFNEYNDDQKFYLSNKEIKPVKCSADIAGKNVVNHCQGGSCATKPCRRDRVTGLYAQECEFIPDEQQTEKASIMFSQSIDSVVEFCTEENHNREAPNMQNQRCNLRSTWEVIRDSEDFKKTTPMTAQPPQPTFSLLQIGQRIVCLVLDKSGSMAIGDRLKRLTQAGKLFLLQTVEQGSWVGMVTFDSAAYVQSALRQIKGGTDRDALTKSLPTVASGGTSICSGLRSAFTVIRKKYKTDGSEIVLLTDGEDNTISSCFNEVKQSGAIIHTVALGPSAAAELEELSKMTGGLQTYASDQAQNNGLIDAFGALSSGNGAVSQHSIQLVSRGSTLQNSQWMNGTVIVDSTVGNDTLFLITWTSQPPQILLWDPSGKKQDGFVVDTNTKMAYLQVPGTAKVGTWTYSLQASSQTLTLTVTSRASSATLPPVTVTSKVNKDTGKFPSPVVVYAKIHQGGLPILRATVTALIESVDGKTVTLELLDNGAGADATKDDGIYSRYFTAYNTNGRYSIKVWALGGVNAARQMGISQQNGAMYRAGRMKNGEIIWNPPRPKINIDDLLSKQVPFSRTSSGGSFVASNVPNAPIPDLFPPCQITDLKAKIQGDSLINLTWTAPGDDYDHGRADRYIIRISTNILDLRDKFNDSLQVNTTDLIPKEATSEEVFVFKPENIAFENGTDLFIAIQAVDEVDLESEISNIAQVSLFLPPQTPPETPSPSLPCPDSNITSAIPGIHILKVMWKWLGELQLSVALG.

Positions 1–21 (MGSFKSSVFILVLHLLEGALS) are cleaved as a signal peptide. Residues 46 to 199 (DETLIQQIKD…DIAGKNVVNH (154 aa)) are metalloprotease domain. A Zn(2+)-binding site is contributed by histidine 156. Glutamate 157 is a catalytic residue. Zn(2+) is bound by residues histidine 160 and asparagine 167. The region spanning 306–475 (IVCLVLDKSG…NGLIDAFGAL (170 aa)) is the VWFA domain. N-linked (GlcNAc...) asparagine glycans are attached at residues asparagine 503, asparagine 514, asparagine 770, asparagine 804, asparagine 810, asparagine 836, and asparagine 885.

The protein belongs to the CLCR family. Glycosylated. In terms of processing, the translation product is autoproteolytically cleaved by the metalloprotease domain in the endoplasmic reticulum into a N-terminal and a C-terminal products that remain physically associated with each other. The cleavage is necessary for calcium-activated chloride channel (CaCC) activation activity. As to expression, expressed in mucin-producing cells in the respiratory and intestinal tracts, cutaneous sweat glands, and renal mucous glands (at protein level). Strong overexpression in the airways of horses with recurrent airway obstruction (at protein level).

It localises to the secreted. Its subcellular location is the extracellular space. Functionally, may be involved in mediating calcium-activated chloride conductance. May play critical roles in goblet cell metaplasia, mucus hypersecretion, cystic fibrosis and AHR. May be involved in the regulation of mucus production and/or secretion by goblet cells. Involved in the regulation of tissue inflammation in the innate immune response. May play a role as a tumor suppressor. Induces MUC5AC. The sequence is that of Calcium-activated chloride channel regulator 1 (CLCA1) from Equus caballus (Horse).